A 432-amino-acid chain; its full sequence is Alcohol acyltransferase 9 (432 aa).

Active-site proton acceptor residues include H156 and D379.

Belongs to the plant acyltransferase family. Expressed in fruit.

It carries out the reaction 2-(methylsulfanyl)acetyl-CoA + butan-1-ol = butyl 2-(methylsulfanyl)acetate + CoA. The catalysed reaction is ethanol + acetyl-CoA = ethyl acetate + CoA. It catalyses the reaction butan-1-ol + acetyl-CoA = butyl acetate + CoA. The enzyme catalyses butan-1-ol + propanoyl-CoA = butyl propanoate + CoA. Functionally, involved in the biosynthesis of volatile esters which confer kiwifruit flavor. Alcohol acyl transferase that can use a wide range of alcohols as substrate to produce esters. Exhibits acetyl-CoA:alcohol O-acyltransferase activity. The sequence is that of Alcohol acyltransferase 9 from Actinidia eriantha (Velvet vine).